A 359-amino-acid chain; its full sequence is 3-dehydroquinate synthase (359 aa).

Residues 71-76 (DGEAYK), 105-109 (GVIGD), 129-130 (TT), Lys-142, and Lys-151 contribute to the NAD(+) site. Zn(2+) is bound by residues Glu-184, His-247, and His-264.

The protein belongs to the sugar phosphate cyclases superfamily. Dehydroquinate synthase family. Co(2+) is required as a cofactor. Requires Zn(2+) as cofactor. NAD(+) serves as cofactor.

Its subcellular location is the cytoplasm. It carries out the reaction 7-phospho-2-dehydro-3-deoxy-D-arabino-heptonate = 3-dehydroquinate + phosphate. Its pathway is metabolic intermediate biosynthesis; chorismate biosynthesis; chorismate from D-erythrose 4-phosphate and phosphoenolpyruvate: step 2/7. Its function is as follows. Catalyzes the conversion of 3-deoxy-D-arabino-heptulosonate 7-phosphate (DAHP) to dehydroquinate (DHQ). The chain is 3-dehydroquinate synthase from Burkholderia vietnamiensis (strain G4 / LMG 22486) (Burkholderia cepacia (strain R1808)).